We begin with the raw amino-acid sequence, 549 residues long: Tigger transposable element-derived protein 7 (549 aa).

The region spanning 1–52 is the HTH psq-type domain; that stretch reads MNKRGKYTTLNLEEKMKVLSRIEAGRSLKSVMDEFGISKSTFYDIKKNKKLI. DNA-binding regions (H-T-H motif) lie at residues 28–48 and 101–132; these read LKSV…IKKN and VELQ…FRNR. The region spanning 68–139 is the HTH CENPB-type domain; it reads KRKRTTGAKY…RNRHAIGNRK (72 aa). The 231-residue stretch at 169-399 folds into the DDE-1 domain; sequence LCLAQLYSGD…VKQITIANAW (231 aa). The disordered stretch occupies residues 527–549; it reads FLKPRPHNIKDSFSGPSTSGSNH. Residues 540 to 549 are compositionally biased toward polar residues; the sequence is SGPSTSGSNH.

It belongs to the tigger transposable element derived protein family. As to expression, expressed in all tissues tested. Higher expression in testis and ovary.

Its subcellular location is the nucleus. This is Tigger transposable element-derived protein 7 (TIGD7) from Homo sapiens (Human).